The following is a 683-amino-acid chain: Kinesin-like protein KIF2B (683 aa).

Residue Thr125 is modified to Phosphothreonine; by PLK1. The stretch at 141–176 (LMTQRKSACLREIEKLQKQRERRRRLHREIRAQRAR) forms a coiled coil. Ser204 is subject to Phosphoserine; by PLK1. The 331-residue stretch at 213–543 (RICVCVRKRP…LRYANRVKEI (331 aa)) folds into the Kinesin motor domain. 303 to 310 (GQTGSGKT) is a binding site for ATP. The stretch at 640-672 (QLLSILEKKIDILTEIRRKLKLLQADIQKENRH) forms a coiled coil.

This sequence belongs to the TRAFAC class myosin-kinesin ATPase superfamily. Kinesin family. MCAK/KIF2 subfamily. In terms of processing, phosphorylation at Thr-125 by PLK1 is required for activity in the correction of kinetochore-microtubules attachment errors, while phosphorylation at Ser-204 also by PLK1 is required for the kinetochore localization and activity in prometaphase.

The protein resides in the cytoplasm. The protein localises to the cytoskeleton. It is found in the microtubule organizing center. Its subcellular location is the centrosome. It localises to the spindle. The protein resides in the chromosome. The protein localises to the centromere. It is found in the kinetochore. Functionally, plus end-directed microtubule-dependent motor required for spindle assembly and chromosome movement during mitosis. Has microtubule depolymerization activity. Plays a role in chromosome congression. In Bos taurus (Bovine), this protein is Kinesin-like protein KIF2B.